The following is a 318-amino-acid chain: Basic leucine zipper (bZIP) transcription factor atfB (318 aa).

Disordered stretches follow at residues 79-100 (LKNT…KKLQ) and 114-164 (FNSS…EKRE). Positions 160-199 (REKREKFLERNRLAASKCRQKKKEHTKLLETRFREVSSKK) are basic motif. Residues 160-223 (REKREKFLER…LNLKNEMLRH (64 aa)) enclose the bZIP domain. The tract at residues 202–216 (LESEIEHLRSEVLNL) is leucine-zipper. The segment at 247-304 (TPNRDLVSPMRSPEQMTASTPHGLSFGFDGPMQLPSEMGSPLDQRRDSEQSIMTESSY) is disordered.

This sequence belongs to the bZIP family. ATF subfamily.

It is found in the nucleus. Functionally, transcription factor that acts as a key player in the regulatory circuit that integrates secondary metabolism and cellular response to oxidative stress. Regulates the genes involved in development, stress response, and secondary metabolism through direct binding to their promoters. Particularly involved in the resistance to oxidative stress in asexual conidiospores. Binds aflatoxin gene promoters carrying the cAMP-response element (CRE1) under aflatoxin-inducing conditions. The chain is Basic leucine zipper (bZIP) transcription factor atfB from Aspergillus parasiticus (strain ATCC 56775 / NRRL 5862 / SRRC 143 / SU-1).